A 302-amino-acid chain; its full sequence is MLAWRVARGAWGSLRVAVRPPGARLGRGGSRRALLPPAACCLGCLAERWRLRPAAFALRLPGTSPRTHCSGAGKAAPEPAAGGDAAAQAPSARWVRASATSSYENPWTIPNLLSMTRIGLAPVLGYLILEEDFNVALGVFALAGLTDLLDGFIARNWANQKSALGSALDPLADKVLISILYISLTYADLIPVPLTYMIISRDVMLIAAVFYVRYRTLPTPRTLAKYFNPCYATARLKPTFISKVNTAVQLILVAASLAAPVFNYADSIYLQILWCCTAFTTAASAYSYYHYGRKTVQVIKGK.

Positions 65-84 (PRTHCSGAGKAAPEPAAGGD) are disordered. A compositionally biased stretch (low complexity) spans 71-84 (GAGKAAPEPAAGGD). 5 helical membrane-spanning segments follow: residues 109–129 (IPNLLSMTRIGLAPVLGYLIL), 133–153 (FNVALGVFALAGLTDLLDGFI), 190–212 (IPVPLTYMIISRDVMLIAAVFYV), 250–270 (LILVAASLAAPVFNYADSIYL), and 271–289 (QILWCCTAFTTAASAYSYY).

It belongs to the CDP-alcohol phosphatidyltransferase class-I family. The cofactor is a divalent metal cation.

It localises to the mitochondrion inner membrane. It catalyses the reaction a CDP-1,2-diacyl-sn-glycerol + a 1,2-diacyl-sn-glycero-3-phospho-(1'-sn-glycerol) = a cardiolipin + CMP + H(+). Its function is as follows. Catalyzes the synthesis of cardiolipin (CL) (diphosphatidylglycerol) by specifically transferring a phosphatidyl group from CDP-diacylglycerol to phosphatidylglycerol (PG). CL is a key phospholipid in mitochondrial membranes and plays important roles in maintaining the functional integrity and dynamics of mitochondria under both optimal and stress conditions. The polypeptide is Cardiolipin synthase (CMP-forming) (Crls1) (Rattus norvegicus (Rat)).